The sequence spans 214 residues: CASP-like protein 0U1 (214 aa).

Topologically, residues Met1–Gly82 are cytoplasmic. A helical membrane pass occupies residues Val83 to Phe103. Residues Ser104 to Glu112 are Extracellular-facing. Residues Phe113–Ser133 form a helical membrane-spanning segment. Residues Cys134 to Lys153 are Cytoplasmic-facing. The chain crosses the membrane as a helical span at residues Ala154–Phe174. Topologically, residues Lys175–Pro214 are extracellular. The tract at residues Arg194 to Pro214 is disordered.

It belongs to the Casparian strip membrane proteins (CASP) family. In terms of assembly, homodimer and heterodimers.

Its subcellular location is the cell membrane. In Ostreococcus tauri, this protein is CASP-like protein 0U1.